The primary structure comprises 312 residues: Putative clathrin assembly protein At2g01920 (312 aa).

One can recognise an ENTH domain in the interval 21 to 152; sequence LITATDEKFT…ILYYNKNMIR (132 aa).

Its subcellular location is the membrane. It is found in the clathrin-coated pit. The protein resides in the golgi apparatus. It localises to the cytoplasmic vesicle. The protein localises to the clathrin-coated vesicle. This is Putative clathrin assembly protein At2g01920 from Arabidopsis thaliana (Mouse-ear cress).